Here is a 143-residue protein sequence, read N- to C-terminus: Antiholin-like protein LrgA (143 aa).

4 consecutive transmembrane segments (helical) span residues 6-26, 30-50, 61-81, and 97-117; these read VYSF…SNII, LPIP…LLCL, LGTA…ISVI, and VIVV…QFIL.

This sequence belongs to the CidA/LrgA family. LrgA subfamily.

Its subcellular location is the cell membrane. Its function is as follows. Inhibits the expression or activity of extracellular murein hydrolases by interacting, possibly with LrgB, with the holin-like protein CidA. The LrgAB and CidA proteins may affect the proton motive force of the membrane. May be involved in programmed cell death (PCD), possibly triggering PCD in response to antibiotics and environmental stresses. The chain is Antiholin-like protein LrgA from Bacillus cereus (strain AH187).